We begin with the raw amino-acid sequence, 98 residues long: Large ribosomal subunit protein uL23 (98 aa).

It belongs to the universal ribosomal protein uL23 family. Part of the 50S ribosomal subunit. Contacts protein L29, and trigger factor when it is bound to the ribosome.

One of the early assembly proteins it binds 23S rRNA. One of the proteins that surrounds the polypeptide exit tunnel on the outside of the ribosome. Forms the main docking site for trigger factor binding to the ribosome. This Teredinibacter turnerae (strain ATCC 39867 / T7901) protein is Large ribosomal subunit protein uL23.